We begin with the raw amino-acid sequence, 86 residues long: Large ribosomal subunit protein uL23 (86 aa).

It belongs to the universal ribosomal protein uL23 family. As to quaternary structure, part of the 50S ribosomal subunit. Contacts protein L29.

Its function is as follows. Binds to 23S rRNA. One of the proteins that surrounds the polypeptide exit tunnel on the outside of the ribosome. In Methanococcus maripaludis (strain C6 / ATCC BAA-1332), this protein is Large ribosomal subunit protein uL23.